The primary structure comprises 78 residues: Large ribosomal subunit protein bL28 (78 aa).

The tract at residues 1-24 (MSKVCQVTGKRPASGNNVSHAHNK) is disordered.

The protein belongs to the bacterial ribosomal protein bL28 family.

In Nitrosococcus oceani (strain ATCC 19707 / BCRC 17464 / JCM 30415 / NCIMB 11848 / C-107), this protein is Large ribosomal subunit protein bL28.